Here is a 917-residue protein sequence, read N- to C-terminus: Bifunctional aspartokinase/homoserine dehydrogenase 2, chloroplastic (917 aa).

The N-terminal 89 residues, 1–89, are a transit peptide targeting the chloroplast; sequence MQGLAVSCQL…EVNTYLPKGD (89 aa). The tract at residues 90-338 is aspartokinase; the sequence is MWSVHKFGGT…VSEAVILSTL (249 aa). The tract at residues 339–563 is interface; it reads SYQEAWEMSY…LSKTTLAVGI (225 aa). ACT domains follow at residues 413–488 and 494–571; these read VEGT…VING and AVGL…LIGG. The interval 564 to 917 is homoserine dehydrogenase; it reads IGPGLIGGAL…RLASYLGAPS (354 aa). Ile569 and Thr650 together coordinate NAD(+). Ile569, Thr650, and Lys674 together coordinate NADP(+). 3 residues coordinate NADPH: Ile569, Thr650, and Lys674. Residues Glu701, Val704, Ala706, and Leu708 each contribute to the Na(+) site. Positions 759 and 762 each coordinate NADP(+). L-homoserine is bound by residues Glu762 and Asp773. Residue Lys777 is the Proton donor of the active site. Residue Gly894 participates in NAD(+) binding. Gly894 serves as a coordination point for NADP(+). Gly894 contributes to the NADPH binding site.

This sequence in the N-terminal section; belongs to the aspartokinase family. It in the C-terminal section; belongs to the homoserine dehydrogenase family. Homo- or heterodimer. It depends on a metal cation as a cofactor.

It localises to the plastid. It is found in the chloroplast. The catalysed reaction is L-homoserine + NADP(+) = L-aspartate 4-semialdehyde + NADPH + H(+). It carries out the reaction L-homoserine + NAD(+) = L-aspartate 4-semialdehyde + NADH + H(+). The enzyme catalyses L-aspartate + ATP = 4-phospho-L-aspartate + ADP. It participates in amino-acid biosynthesis; L-lysine biosynthesis via DAP pathway; (S)-tetrahydrodipicolinate from L-aspartate: step 1/4. The protein operates within amino-acid biosynthesis; L-methionine biosynthesis via de novo pathway; L-homoserine from L-aspartate: step 1/3. It functions in the pathway amino-acid biosynthesis; L-methionine biosynthesis via de novo pathway; L-homoserine from L-aspartate: step 3/3. Its pathway is amino-acid biosynthesis; L-threonine biosynthesis; L-threonine from L-aspartate: step 1/5. It participates in amino-acid biosynthesis; L-threonine biosynthesis; L-threonine from L-aspartate: step 3/5. Functionally, bifunctional aspartate kinase and homoserine dehydrogenase that catalyzes the first and the third steps toward the synthesis of lysine, methionine and threonine from aspartate. The chain is Bifunctional aspartokinase/homoserine dehydrogenase 2, chloroplastic (AKHSDH2) from Zea mays (Maize).